Here is a 455-residue protein sequence, read N- to C-terminus: MSLATDCPSSLASASERPLLSQVQLARAAAQHTATLPTAIKNAALEAMATALLEHQEPILAANRADLERAAEMVKAGELSASAYARLKLDAHKLADMVAGVRQVIRLGDPVGRALLIRELDEGLILERRTYPLGVLGVIFESRPDALVQIAALAVKTGNSVLLKGGSEALLSCQALMAAIQAGLQQIPEFPQGSLQLLTSRAEVKALLQLEGLVDLIIPRGSSSFVRYILENTRIPVLGHADGLCHLYVDRAADVDMAIKLTVDSKTQYPAACNAIETLLVHKAIAPHFLPLAVKALREKGVELRGDPLCRELVPDLIPATEDDWSTEYADLILSIKVVGSLDEAIAHIQQYGSRHTEAIVTEDAAAARRFLDEVDAAGVFHNASTRFADGFRYGFGAEVGISTQKLPPRGPVGLEGLVTYRYQLRGQGHLVADYTGPQARPFQHRDRLNNTGLA.

This sequence belongs to the gamma-glutamyl phosphate reductase family.

Its subcellular location is the cytoplasm. The enzyme catalyses L-glutamate 5-semialdehyde + phosphate + NADP(+) = L-glutamyl 5-phosphate + NADPH + H(+). It functions in the pathway amino-acid biosynthesis; L-proline biosynthesis; L-glutamate 5-semialdehyde from L-glutamate: step 2/2. Catalyzes the NADPH-dependent reduction of L-glutamate 5-phosphate into L-glutamate 5-semialdehyde and phosphate. The product spontaneously undergoes cyclization to form 1-pyrroline-5-carboxylate. The protein is Gamma-glutamyl phosphate reductase of Synechococcus sp. (strain JA-2-3B'a(2-13)) (Cyanobacteria bacterium Yellowstone B-Prime).